The following is a 418-amino-acid chain: Cyclin-A1 (418 aa).

It belongs to the cyclin family. Cyclin AB subfamily. As to quaternary structure, interacts with the CDK1 and the CDK2 protein kinases to form a serine/threonine kinase holoenzyme complex. The cyclin subunit imparts substrate specificity to the complex.

It is found in the nucleus. Its function is as follows. May be involved in the control of the cell cycle at the G1/S (start) and G2/M (mitosis) transitions. This chain is Cyclin-A1 (ccna1), found in Xenopus laevis (African clawed frog).